A 129-amino-acid polypeptide reads, in one-letter code: Small ribosomal subunit protein uS11 (129 aa).

The protein belongs to the universal ribosomal protein uS11 family. In terms of assembly, part of the 30S ribosomal subunit. Interacts with proteins S7 and S18. Binds to IF-3.

Located on the platform of the 30S subunit, it bridges several disparate RNA helices of the 16S rRNA. Forms part of the Shine-Dalgarno cleft in the 70S ribosome. This chain is Small ribosomal subunit protein uS11, found in Lawsonia intracellularis (strain PHE/MN1-00).